The following is a 285-amino-acid chain: Energy-coupling factor transporter ATP-binding protein EcfA2 (285 aa).

The region spanning 3 to 245 (IKIENLNHIY…VETLEKIGLA (243 aa)) is the ABC transporter domain. ATP is bound at residue 40–47 (GHTGSGKS).

It belongs to the ABC transporter superfamily. Energy-coupling factor EcfA family. As to quaternary structure, forms a stable energy-coupling factor (ECF) transporter complex composed of 2 membrane-embedded substrate-binding proteins (S component), 2 ATP-binding proteins (A component) and 2 transmembrane proteins (T component).

It localises to the cell membrane. In terms of biological role, ATP-binding (A) component of a common energy-coupling factor (ECF) ABC-transporter complex. Unlike classic ABC transporters this ECF transporter provides the energy necessary to transport a number of different substrates. The protein is Energy-coupling factor transporter ATP-binding protein EcfA2 of Clostridium perfringens (strain 13 / Type A).